A 293-amino-acid polypeptide reads, in one-letter code: tRNA pseudouridine synthase A (293 aa).

Aspartate 67 acts as the Nucleophile in catalysis. Tyrosine 125 is a substrate binding site.

This sequence belongs to the tRNA pseudouridine synthase TruA family. In terms of assembly, homodimer.

The enzyme catalyses uridine(38/39/40) in tRNA = pseudouridine(38/39/40) in tRNA. Functionally, formation of pseudouridine at positions 38, 39 and 40 in the anticodon stem and loop of transfer RNAs. In Synechococcus sp. (strain CC9605), this protein is tRNA pseudouridine synthase A.